Here is a 165-residue protein sequence, read N- to C-terminus: NADH-quinone oxidoreductase subunit I (165 aa).

4Fe-4S ferredoxin-type domains are found at residues 57–86 (RRYE…IESE) and 96–125 (TRYD…ETHI). Residues C66, C69, C72, C76, C105, C108, C111, and C115 each contribute to the [4Fe-4S] cluster site.

The protein belongs to the complex I 23 kDa subunit family. NDH-1 is composed of 14 different subunits. Subunits NuoA, H, J, K, L, M, N constitute the membrane sector of the complex. [4Fe-4S] cluster is required as a cofactor.

Its subcellular location is the cell inner membrane. It catalyses the reaction a quinone + NADH + 5 H(+)(in) = a quinol + NAD(+) + 4 H(+)(out). Functionally, NDH-1 shuttles electrons from NADH, via FMN and iron-sulfur (Fe-S) centers, to quinones in the respiratory chain. The immediate electron acceptor for the enzyme in this species is believed to be ubiquinone. Couples the redox reaction to proton translocation (for every two electrons transferred, four hydrogen ions are translocated across the cytoplasmic membrane), and thus conserves the redox energy in a proton gradient. This Methylibium petroleiphilum (strain ATCC BAA-1232 / LMG 22953 / PM1) protein is NADH-quinone oxidoreductase subunit I.